Consider the following 361-residue polypeptide: Phospho-N-acetylmuramoyl-pentapeptide-transferase (361 aa).

Helical transmembrane passes span 26 to 46, 71 to 91, 97 to 117, 134 to 154, 168 to 188, 200 to 220, 236 to 256, 264 to 284, 290 to 310, and 338 to 358; these read AGGA…CIIE, TPTM…FLWA, FILW…CDDY, IFGQ…FPSN, GFFI…IVGS, GLAI…AYFA, GAGE…GFLW, IFMG…VSLF, VLVL…IQIF, and KVTV…FASL.

The protein belongs to the glycosyltransferase 4 family. MraY subfamily. Mg(2+) is required as a cofactor.

The protein resides in the cell membrane. The catalysed reaction is UDP-N-acetyl-alpha-D-muramoyl-L-alanyl-gamma-D-glutamyl-meso-2,6-diaminopimeloyl-D-alanyl-D-alanine + di-trans,octa-cis-undecaprenyl phosphate = di-trans,octa-cis-undecaprenyl diphospho-N-acetyl-alpha-D-muramoyl-L-alanyl-D-glutamyl-meso-2,6-diaminopimeloyl-D-alanyl-D-alanine + UMP. It participates in cell wall biogenesis; peptidoglycan biosynthesis. In terms of biological role, catalyzes the initial step of the lipid cycle reactions in the biosynthesis of the cell wall peptidoglycan: transfers peptidoglycan precursor phospho-MurNAc-pentapeptide from UDP-MurNAc-pentapeptide onto the lipid carrier undecaprenyl phosphate, yielding undecaprenyl-pyrophosphoryl-MurNAc-pentapeptide, known as lipid I. The polypeptide is Phospho-N-acetylmuramoyl-pentapeptide-transferase (Endomicrobium trichonymphae).